The following is a 560-amino-acid chain: Dimethylaniline monooxygenase [N-oxide-forming] 4 (560 aa).

FAD-binding positions include 9–13, Glu-32, and 40–41; these read GAGVS and LW. NADP(+)-binding positions include 60-61 and 195-198; these read TN and TGGD. The chain crosses the membrane as a helical span at residues 510-530; that stretch reads LSHYLIAWGAPVLLVSLLLIY.

Belongs to the FMO family. The cofactor is FAD.

The protein localises to the microsome membrane. The protein resides in the endoplasmic reticulum membrane. The enzyme catalyses N,N-dimethylaniline + NADPH + O2 + H(+) = N,N-dimethylaniline N-oxide + NADP(+) + H2O. This protein is involved in the oxidative metabolism of a variety of xenobiotics such as drugs and pesticides. In Mus musculus (Mouse), this protein is Dimethylaniline monooxygenase [N-oxide-forming] 4 (Fmo4).